The chain runs to 218 residues: Protein N-lysine methyltransferase METTL21A (218 aa).

S-adenosyl-L-methionine-binding positions include Trp47, 73 to 75 (GAG), Asp94, Trp125, and Ala143.

This sequence belongs to the methyltransferase superfamily. METTL21 family. Interacts with heat shock 70 family members; at least some of these proteins are methylation substrates.

Its subcellular location is the cytoplasm. The enzyme catalyses L-lysyl-[protein] + 3 S-adenosyl-L-methionine = N(6),N(6),N(6)-trimethyl-L-lysyl-[protein] + 3 S-adenosyl-L-homocysteine + 3 H(+). Its function is as follows. Protein-lysine methyltransferase that selectively trimethylates residues in heat shock protein 70 (HSP70) family members. Contributes to the in vivo trimethylation of Lys residues in HSPA1 and HSPA8. In vitro methylates 'Lys-561' in HSPA1, 'Lys-564' in HSPA2, 'Lys-585' in HSPA5, 'Lys-563' in HSPA6 and 'Lys-561' in HSPA8. In Mus musculus (Mouse), this protein is Protein N-lysine methyltransferase METTL21A (Mettl21A).